Reading from the N-terminus, the 231-residue chain is Lipoprotein-releasing system ATP-binding protein LolD (231 aa).

In terms of domain architecture, ABC transporter spans 6 to 231 (LQVQAVSKSY…YLQAVAEHAQ (226 aa)). 42 to 49 (GTSGSGKS) contacts ATP.

The protein belongs to the ABC transporter superfamily. Lipoprotein translocase (TC 3.A.1.125) family. As to quaternary structure, the complex is composed of two ATP-binding proteins (LolD) and two transmembrane proteins (LolC and LolE).

It is found in the cell inner membrane. Part of the ABC transporter complex LolCDE involved in the translocation of mature outer membrane-directed lipoproteins, from the inner membrane to the periplasmic chaperone, LolA. Responsible for the formation of the LolA-lipoprotein complex in an ATP-dependent manner. This chain is Lipoprotein-releasing system ATP-binding protein LolD, found in Shewanella sp. (strain MR-7).